Here is a 145-residue protein sequence, read N- to C-terminus: Peptide methionine sulfoxide reductase MsrB (145 aa).

Positions 4–127 (SDELKQRIGD…NSAALKFIPY (124 aa)) constitute a MsrB domain. The Nucleophile role is filled by Cys116.

Belongs to the MsrB Met sulfoxide reductase family.

The enzyme catalyses L-methionyl-[protein] + [thioredoxin]-disulfide + H2O = L-methionyl-(R)-S-oxide-[protein] + [thioredoxin]-dithiol. This is Peptide methionine sulfoxide reductase MsrB from Streptococcus pyogenes serotype M18 (strain MGAS8232).